The following is a 248-amino-acid chain: DNA repair protein RecO (248 aa).

It belongs to the RecO family.

Functionally, involved in DNA repair and RecF pathway recombination. This Chelativorans sp. (strain BNC1) protein is DNA repair protein RecO.